Consider the following 316-residue polypeptide: Biotin synthase (316 aa).

The Radical SAM core domain maps to 39–263; the sequence is NAIQCSTLLS…LFPKAYVRLS (225 aa). [4Fe-4S] cluster contacts are provided by C54, C58, and C61. Positions 98, 129, 189, and 261 each coordinate [2Fe-2S] cluster.

The protein belongs to the radical SAM superfamily. Biotin synthase family. As to quaternary structure, homodimer. [4Fe-4S] cluster serves as cofactor. It depends on [2Fe-2S] cluster as a cofactor.

It catalyses the reaction (4R,5S)-dethiobiotin + (sulfur carrier)-SH + 2 reduced [2Fe-2S]-[ferredoxin] + 2 S-adenosyl-L-methionine = (sulfur carrier)-H + biotin + 2 5'-deoxyadenosine + 2 L-methionine + 2 oxidized [2Fe-2S]-[ferredoxin]. It participates in cofactor biosynthesis; biotin biosynthesis; biotin from 7,8-diaminononanoate: step 2/2. Functionally, catalyzes the conversion of dethiobiotin (DTB) to biotin by the insertion of a sulfur atom into dethiobiotin via a radical-based mechanism. The sequence is that of Biotin synthase from Acidithiobacillus ferrooxidans (strain ATCC 23270 / DSM 14882 / CIP 104768 / NCIMB 8455) (Ferrobacillus ferrooxidans (strain ATCC 23270)).